A 141-amino-acid polypeptide reads, in one-letter code: Large ribosomal subunit protein uL11 (141 aa).

This sequence belongs to the universal ribosomal protein uL11 family. As to quaternary structure, part of the ribosomal stalk of the 50S ribosomal subunit. Interacts with L10 and the large rRNA to form the base of the stalk. L10 forms an elongated spine to which L12 dimers bind in a sequential fashion forming a multimeric L10(L12)X complex. One or more lysine residues are methylated.

Functionally, forms part of the ribosomal stalk which helps the ribosome interact with GTP-bound translation factors. This chain is Large ribosomal subunit protein uL11, found in Acaryochloris marina (strain MBIC 11017).